A 122-amino-acid polypeptide reads, in one-letter code: Small ribosomal subunit protein uS13 (122 aa).

The interval 97–122 is disordered; sequence PVRGQRTRTNARTRKGPRKTVAKKKK. Residues 101 to 122 are compositionally biased toward basic residues; sequence QRTRTNARTRKGPRKTVAKKKK.

The protein belongs to the universal ribosomal protein uS13 family. In terms of assembly, part of the 30S ribosomal subunit. Forms a loose heterodimer with protein S19. Forms two bridges to the 50S subunit in the 70S ribosome.

Functionally, located at the top of the head of the 30S subunit, it contacts several helices of the 16S rRNA. In the 70S ribosome it contacts the 23S rRNA (bridge B1a) and protein L5 of the 50S subunit (bridge B1b), connecting the 2 subunits; these bridges are implicated in subunit movement. Contacts the tRNAs in the A and P-sites. In Caldanaerobacter subterraneus subsp. tengcongensis (strain DSM 15242 / JCM 11007 / NBRC 100824 / MB4) (Thermoanaerobacter tengcongensis), this protein is Small ribosomal subunit protein uS13.